The sequence spans 240 residues: DNA repair protein RecO (240 aa).

It belongs to the RecO family.

Functionally, involved in DNA repair and RecF pathway recombination. The sequence is that of DNA repair protein RecO from Actinobacillus pleuropneumoniae serotype 5b (strain L20).